Consider the following 143-residue polypeptide: Large ribosomal subunit protein uL11 (143 aa).

Belongs to the universal ribosomal protein uL11 family. In terms of assembly, part of the ribosomal stalk of the 50S ribosomal subunit. Interacts with L10 and the large rRNA to form the base of the stalk. L10 forms an elongated spine to which L12 dimers bind in a sequential fashion forming a multimeric L10(L12)X complex. Post-translationally, one or more lysine residues are methylated.

Forms part of the ribosomal stalk which helps the ribosome interact with GTP-bound translation factors. The sequence is that of Large ribosomal subunit protein uL11 from Pseudomonas entomophila (strain L48).